Reading from the N-terminus, the 131-residue chain is Small ribosomal subunit protein eS24 (131 aa).

The tract at residues 93-131 is disordered; sequence RHGLYEKKKTSRKQRKERKNRMKKVRGTKKASVGAAGKK. Positions 101–121 are enriched in basic residues; the sequence is KTSRKQRKERKNRMKKVRGTK.

This sequence belongs to the eukaryotic ribosomal protein eS24 family. In terms of assembly, component of the small ribosomal subunit. Part of the small subunit (SSU) processome, composed of more than 70 proteins and the RNA chaperone small nucleolar RNA (snoRNA) U3.

The protein resides in the cytoplasm. Its subcellular location is the nucleus. The protein localises to the nucleolus. Its function is as follows. Component of the small ribosomal subunit. The ribosome is a large ribonucleoprotein complex responsible for the synthesis of proteins in the cell. Required for processing of pre-rRNA and maturation of 40S ribosomal subunits. Part of the small subunit (SSU) processome, first precursor of the small eukaryotic ribosomal subunit. During the assembly of the SSU processome in the nucleolus, many ribosome biogenesis factors, an RNA chaperone and ribosomal proteins associate with the nascent pre-rRNA and work in concert to generate RNA folding, modifications, rearrangements and cleavage as well as targeted degradation of pre-ribosomal RNA by the RNA exosome. The chain is Small ribosomal subunit protein eS24 (rps24) from Ictalurus punctatus (Channel catfish).